Reading from the N-terminus, the 386-residue chain is Succinate--CoA ligase [ADP-forming] subunit beta (386 aa).

ATP is bound by residues K46, E99, A102, and E107. Positions 199 and 213 each coordinate Mg(2+). Substrate is bound by residues N264 and 321 to 323 (GIM).

It belongs to the succinate/malate CoA ligase beta subunit family. As to quaternary structure, heterotetramer of two alpha and two beta subunits. The cofactor is Mg(2+).

It catalyses the reaction succinate + ATP + CoA = succinyl-CoA + ADP + phosphate. The catalysed reaction is GTP + succinate + CoA = succinyl-CoA + GDP + phosphate. The protein operates within carbohydrate metabolism; tricarboxylic acid cycle; succinate from succinyl-CoA (ligase route): step 1/1. Succinyl-CoA synthetase functions in the citric acid cycle (TCA), coupling the hydrolysis of succinyl-CoA to the synthesis of either ATP or GTP and thus represents the only step of substrate-level phosphorylation in the TCA. The beta subunit provides nucleotide specificity of the enzyme and binds the substrate succinate, while the binding sites for coenzyme A and phosphate are found in the alpha subunit. This chain is Succinate--CoA ligase [ADP-forming] subunit beta, found in Orientia tsutsugamushi (strain Ikeda) (Rickettsia tsutsugamushi).